The following is a 742-amino-acid chain: Phosphoribosylformylglycinamidine synthase subunit PurL (742 aa).

His-50 is an active-site residue. Residues Tyr-53 and Lys-92 each contribute to the ATP site. Glu-94 contributes to the Mg(2+) binding site. Residues 95-98 (SHNH) and Arg-117 each bind substrate. The active-site Proton acceptor is His-96. Asp-118 is a Mg(2+) binding site. Gln-241 contributes to the substrate binding site. Asp-269 is a binding site for Mg(2+). A substrate-binding site is contributed by 313-315 (ESQ). ATP contacts are provided by Asp-494 and Gly-531. Position 532 (Asn-532) interacts with Mg(2+). A substrate-binding site is contributed by Ser-534.

Belongs to the FGAMS family. In terms of assembly, monomer. Part of the FGAM synthase complex composed of 1 PurL, 1 PurQ and 2 PurS subunits.

The protein localises to the cytoplasm. It catalyses the reaction N(2)-formyl-N(1)-(5-phospho-beta-D-ribosyl)glycinamide + L-glutamine + ATP + H2O = 2-formamido-N(1)-(5-O-phospho-beta-D-ribosyl)acetamidine + L-glutamate + ADP + phosphate + H(+). It functions in the pathway purine metabolism; IMP biosynthesis via de novo pathway; 5-amino-1-(5-phospho-D-ribosyl)imidazole from N(2)-formyl-N(1)-(5-phospho-D-ribosyl)glycinamide: step 1/2. Its function is as follows. Part of the phosphoribosylformylglycinamidine synthase complex involved in the purines biosynthetic pathway. Catalyzes the ATP-dependent conversion of formylglycinamide ribonucleotide (FGAR) and glutamine to yield formylglycinamidine ribonucleotide (FGAM) and glutamate. The FGAM synthase complex is composed of three subunits. PurQ produces an ammonia molecule by converting glutamine to glutamate. PurL transfers the ammonia molecule to FGAR to form FGAM in an ATP-dependent manner. PurS interacts with PurQ and PurL and is thought to assist in the transfer of the ammonia molecule from PurQ to PurL. The chain is Phosphoribosylformylglycinamidine synthase subunit PurL from Sinorhizobium fredii (strain NBRC 101917 / NGR234).